Here is a 677-residue protein sequence, read N- to C-terminus: Protein windpipe (677 aa).

The signal sequence occupies residues 1 to 20 (MERVHLTAWLALFLIVVANA). The Extracellular segment spans residues 21–451 (TPTPARTPTG…IGKPKDDSSA (431 aa)). N-linked (GlcNAc...) asparagine glycosylation is found at Asn-53 and Asn-80. LRR repeat units lie at residues 91-116 (LPEL…GLKR), 118-133 (NLKH…RKLP), 134-156 (QHLQ…LTHM), and 158-183 (QLHQ…NWLV). Residues Asn-145 and Asn-170 are each glycosylated (N-linked (GlcNAc...) asparagine). The LRRCT domain occupies 184–216 (ERIVYMEHPVVCSYPLEFRGRSWLQLKQDEICK). Disordered regions lie at residues 264-285 (AKKV…SGDL), 298-317 (TVAE…ASPS), and 325-385 (KDED…TVFS). The segment covering 347-372 (SKVKITSEDDIDSDGKPEESDVRPLE) has biased composition (basic and acidic residues). Polar residues predominate over residues 374–385 (PENSENPDTVFS). A helical transmembrane segment spans residues 452-472 (IYYLLAVIGLIVVGLVLFVAI). Residues 473–677 (KRCKYDSNAA…EPTHQVINGH (205 aa)) are Cytoplasmic-facing. Disordered stretches follow at residues 502–523 (LGKP…LIGE) and 539–677 (NGEA…INGH). The span at 595-607 (AQQQQLAEQNNNE) shows a compositional bias: low complexity.

In terms of assembly, interacts with dome; the interaction promotes internalization of dome and its subsequent lysosomal degradation. In adult intestine, expressed in both small progenitor cells and large nuclei enterocytes (at protein level). During embryogenesis, restricted to the developing trachea.

It localises to the cell membrane. Functionally, plays a role in negative regulation of the JAK/STAT pathway by binding to the receptor dome and promoting its internalization for subsequent lysosomal degradation, thereby reducing JAK/STAT signaling. This is Protein windpipe from Drosophila melanogaster (Fruit fly).